A 734-amino-acid chain; its full sequence is Photosystem I P700 chlorophyll a apoprotein A2 (734 aa).

A run of 8 helical transmembrane segments spans residues 46-69, 135-158, 175-199, 273-291, 330-353, 369-395, 417-439, and 517-535; these read IFASHFGQLAIIFLWTSGNLFHVA, LYGGSIFLLFVSALFLIAGWLHLQ, LNHHLSGLFGVSSLAWTGHLVHVAI, MAHHHLAIAVIFIIAGHMY, LHFQLGLALASLGVITSLVAQHMY, AALYTHHQYIAGFIMTGAFAHGAIFFI, AIISHLSWASLFLGFHTLGLYVH, and FLVHHAIALGLHTTTLILV. The [4Fe-4S] cluster site is built by cysteine 559 and cysteine 568. Transmembrane regions (helical) follow at residues 575-596 and 643-665; these read AFYLAVFWMLNTIGWVTFYWHW and LSVWAWMFLFGHLVWATGFMFLI. 3 residues coordinate chlorophyll a: histidine 654, methionine 662, and tyrosine 670. Position 671 (tryptophan 671) interacts with phylloquinone. A helical membrane pass occupies residues 707-727; sequence LVGLAHFSVGYIFTYAAFLIA.

The protein belongs to the PsaA/PsaB family. In terms of assembly, the PsaA/B heterodimer binds the P700 chlorophyll special pair and subsequent electron acceptors. PSI consists of a core antenna complex that captures photons, and an electron transfer chain that converts photonic excitation into a charge separation. The eukaryotic PSI reaction center is composed of at least 11 subunits. It depends on P700 is a chlorophyll a/chlorophyll a' dimer, A0 is one or more chlorophyll a, A1 is one or both phylloquinones and FX is a shared 4Fe-4S iron-sulfur center. as a cofactor.

The protein resides in the plastid. It localises to the chloroplast thylakoid membrane. It carries out the reaction reduced [plastocyanin] + hnu + oxidized [2Fe-2S]-[ferredoxin] = oxidized [plastocyanin] + reduced [2Fe-2S]-[ferredoxin]. In terms of biological role, psaA and PsaB bind P700, the primary electron donor of photosystem I (PSI), as well as the electron acceptors A0, A1 and FX. PSI is a plastocyanin-ferredoxin oxidoreductase, converting photonic excitation into a charge separation, which transfers an electron from the donor P700 chlorophyll pair to the spectroscopically characterized acceptors A0, A1, FX, FA and FB in turn. Oxidized P700 is reduced on the lumenal side of the thylakoid membrane by plastocyanin. The protein is Photosystem I P700 chlorophyll a apoprotein A2 of Physcomitrium patens (Spreading-leaved earth moss).